The following is a 516-amino-acid chain: Endoglucanase 20 (516 aa).

A signal peptide spans 1-23 (MAAGMVATMVLLTCLAAGGLVVG). N83 carries an N-linked (GlcNAc...) asparagine glycan. D93 functions as the Nucleophile in the catalytic mechanism. Active-site residues include H416, D468, and E477.

The protein belongs to the glycosyl hydrolase 9 (cellulase E) family.

The protein localises to the secreted. The enzyme catalyses Endohydrolysis of (1-&gt;4)-beta-D-glucosidic linkages in cellulose, lichenin and cereal beta-D-glucans.. The chain is Endoglucanase 20 (GLU15) from Oryza sativa subsp. japonica (Rice).